The chain runs to 525 residues: GMP synthase [glutamine-hydrolyzing] (525 aa).

The Glutamine amidotransferase type-1 domain maps to 16–205; it reads PVLVVDFGAQ…LHDFAGIGAR (190 aa). C93 serves as the catalytic Nucleophile. Residues H179 and E181 contribute to the active site. A GMPS ATP-PPase domain is found at 206-399; that stretch reads WTPANIANAL…LGLPEEIVAR (194 aa). 233–239 provides a ligand contact to ATP; it reads SGGVDSA.

In terms of assembly, homodimer.

The enzyme catalyses XMP + L-glutamine + ATP + H2O = GMP + L-glutamate + AMP + diphosphate + 2 H(+). Its pathway is purine metabolism; GMP biosynthesis; GMP from XMP (L-Gln route): step 1/1. Its function is as follows. Catalyzes the synthesis of GMP from XMP. The protein is GMP synthase [glutamine-hydrolyzing] of Mycobacterium marinum (strain ATCC BAA-535 / M).